The sequence spans 341 residues: Delta(1)-pyrroline-2-carboxylate reductase (341 aa).

The active-site Charge relay system is serine 47. The active-site Proton donor is histidine 48. Arginine 52 is a binding site for substrate. NADP(+) is bound at residue 120 to 124 (HFSAL). Threonine 160 is a binding site for substrate. 178–180 (DFA) contributes to the NADP(+) binding site. Residue 186 to 187 (RG) coordinates substrate. Glutamate 188 acts as the Charge relay system in catalysis. Residues 229–230 (HK) and 305–311 (RLPSERR) each bind NADP(+).

This sequence belongs to the LDH2/MDH2 oxidoreductase family. Homodimer.

It catalyses the reaction L-proline + NAD(+) = 1-pyrroline-2-carboxylate + NADH + H(+). The catalysed reaction is L-proline + NADP(+) = 1-pyrroline-2-carboxylate + NADPH + H(+). Its function is as follows. Catalyzes the reduction of Delta(1)-pyrroline-2-carboxylate (Pyr2C) to L-proline, using NADPH as the electron donor. Is likely involved in a degradation pathway that converts cis- and trans-3-hydroxy-L-proline (c3LHyp and t3LHyp) to L-proline, which would allow S.novella to grow on c3LHyp or t3LHyp as a sole carbon source. This chain is Delta(1)-pyrroline-2-carboxylate reductase, found in Ancylobacter novellus (strain ATCC 8093 / DSM 506 / JCM 20403 / CCM 1077 / IAM 12100 / NBRC 12443 / NCIMB 10456) (Starkeya novella).